Here is a 369-residue protein sequence, read N- to C-terminus: Protein HGH1 homolog (369 aa).

This sequence belongs to the HGH1 family.

This is Protein HGH1 homolog from Drosophila melanogaster (Fruit fly).